We begin with the raw amino-acid sequence, 1040 residues long: MQVLPPSSTGGPSRLFIMRPVATTLLMVAILLAGIIGYRALPVSALPEVDYPTIQVVTLYPGASPDVMTSAVTAPLERQFGQMSGLKQMSSQSSGGASVITLQFQLTLPLDVAEQEVQAAINAATNLLPSDLPNPPVYSKVNPADPPIMTLAVTSTAMPMTQVEDMVETRVAQKISQISGVGLVTLSGGQRPAVRVKLNAQAIAALGLTSETVRTAITGANVNSAKGSLDGPSRAVTLSANDQMQSAEEYRQLIIAYQNSAPIRLGDVATVEQGAENSWLGAWANKEQAIVMNVQRQPGANIISTADSIRQMLPQLTESLPKSVKVTVLSDRTTNIRASVDDTQFELMMAIALVVMIIYLFLRNIPATIIPGVAVPLSLIGTFAVMVFLDFSINNLTLMALTIATGFVVDDAIVVIENISRYIEKGEKPLAAALKGAGEIGFTIISLTFSLIAVLIPLLFMGDIVGRLFREFAITLAVAILISAVVSLTLTPMMCARMLSQESLRKQNRFSRASEKMFDRIIAAYGRGLAKVLNHPWLTLSVALSTLLLSVLLWVFIPKGFFPVQDNGIIQGTLQAPQSSSFTNMAQRQRQVADVILQDPAVQSLTSFVGVDGTNPSLNSARLQINLKPLDERDDRVQKVIARLQTAVDKVPGVDLFLQPTQDLTIDTQVSRTQYQFTLQATSLDALSTWVPQLVEKLQQLPQLSDVSSDWQDKGLVAYVNVDRDSASRLGISMADVDNALYNAFGQRLISTIYTQANQYRVVLEHNTENTPGLAALDTIRLTSSDGGVVPLSSIAKIEQRFAPLSINHLDQFPVTTISFNVPDNYSLGDAVQAIMDTEKTLNLPVDITTQFQGSTLAFQSALGSTVWLIVAAVVAMYIVLGILYESFIHPITILSTLPTAGVGALLALMIAGSELDVIAIIGIILLIGIVKKNAIMMIDFALAAEREQGMSPRDAIYQACLLRFRPILMTTLAALLGALPLMLSTGVGAELRRPLGIGMVGGLIVSQVLTLFTTPVIYLLFDRLALWTKSRFARHEEEA.

A run of 12 helical transmembrane segments spans residues 16-36, 347-367, 369-389, 396-416, 440-460, 472-492, 537-557, 863-883, 888-908, 911-931, 968-988, and 998-1018; these read FIMR…AGII, LMMA…NIPA, IIPG…MVFL, LTLM…IVVI, IGFT…PLLF, FAIT…TLTP, WLTL…WVFI, LGST…VLGI, FIHP…ALLA, IAGS…IGIV, ILMT…STGV, and IGMV…TPVI.

Belongs to the resistance-nodulation-cell division (RND) (TC 2.A.6) family. MdtB subfamily. As to quaternary structure, part of a tripartite efflux system composed of MdtA, MdtB and MdtC. MdtB forms a heteromultimer with MdtC.

The protein localises to the cell inner membrane. In terms of biological role, the MdtABC tripartite complex confers resistance against novobiocin and deoxycholate. This is Multidrug resistance protein MdtB from Escherichia coli O7:K1 (strain IAI39 / ExPEC).